The following is a 94-amino-acid chain: Acylphosphatase (94 aa).

Residues 7–94 form the Acylphosphatase-like domain; sequence RLTARITGVV…GEFDDFRIID (88 aa). Catalysis depends on residues R22 and N40.

It belongs to the acylphosphatase family.

The catalysed reaction is an acyl phosphate + H2O = a carboxylate + phosphate + H(+). The sequence is that of Acylphosphatase (acyP) from Paenarthrobacter aurescens (strain TC1).